The chain runs to 345 residues: Aspartate--ammonia ligase (345 aa).

This sequence belongs to the class-II aminoacyl-tRNA synthetase family. AsnA subfamily.

It localises to the cytoplasm. The enzyme catalyses L-aspartate + NH4(+) + ATP = L-asparagine + AMP + diphosphate + H(+). It functions in the pathway amino-acid biosynthesis; L-asparagine biosynthesis; L-asparagine from L-aspartate (ammonia route): step 1/1. In Bacteroides fragilis (strain ATCC 25285 / DSM 2151 / CCUG 4856 / JCM 11019 / LMG 10263 / NCTC 9343 / Onslow / VPI 2553 / EN-2), this protein is Aspartate--ammonia ligase.